Consider the following 408-residue polypeptide: MKKAAIITIGSELLEGLILNKNAQFLCQELKNLGYIVVKVSTVGDDLISISEEVKTLLLKVDLLILTGGLGPTQDDLTRDAVAKVLNRSLKLNEELLSKIKEKIKKYHSEIPQNIERQALVIDGAEVLDNPVGSAPGQLLTVDGKIVILLPGPPRELIPMFNALKDRLRTPDALYQVVLKYYSIPEAVLEDLLKDILYSQNIVEVATMADHVEGVRLRLTTHMKNKEYLDEMVKKILDKTGEHLYGVNDEKMEEVVVRLLKDRKKTLAVAESCTGGMLSSLVVNVPGASEVFIGGVVAYSNDLKKHILGVREDTLKKHGAVSEECVQEMTEGLKKLTGADICVSISGIAGPSGGTPEKPVGTVFIDIFEHEHITMRYNFTGDRNMIRTRSAMMALENLRKYLKGRERV.

Belongs to the CinA family.

In Thermotoga sp. (strain RQ2), this protein is CinA-like protein.